A 230-amino-acid polypeptide reads, in one-letter code: 7-cyano-7-deazaguanine synthase (230 aa).

7–17 (CSGGLDSVSLA) lines the ATP pocket. The Zn(2+) site is built by Cys185, Cys193, Cys196, and Cys199.

Belongs to the QueC family. It depends on Zn(2+) as a cofactor.

It catalyses the reaction 7-carboxy-7-deazaguanine + NH4(+) + ATP = 7-cyano-7-deazaguanine + ADP + phosphate + H2O + H(+). It functions in the pathway purine metabolism; 7-cyano-7-deazaguanine biosynthesis. In terms of biological role, catalyzes the ATP-dependent conversion of 7-carboxy-7-deazaguanine (CDG) to 7-cyano-7-deazaguanine (preQ(0)). This is 7-cyano-7-deazaguanine synthase from Ruegeria pomeroyi (strain ATCC 700808 / DSM 15171 / DSS-3) (Silicibacter pomeroyi).